Reading from the N-terminus, the 337-residue chain is Glycerol-3-phosphate dehydrogenase [NAD(P)+] (337 aa).

Residues W11, R30, and K113 each coordinate NADPH. 3 residues coordinate sn-glycerol 3-phosphate: K113, G141, and S143. Position 145 (A145) interacts with NADPH. Sn-glycerol 3-phosphate-binding residues include K196, D249, S259, R260, and N261. K196 serves as the catalytic Proton acceptor. NADPH is bound at residue R260. Residues V284 and E286 each contribute to the NADPH site.

It belongs to the NAD-dependent glycerol-3-phosphate dehydrogenase family.

The protein localises to the cytoplasm. It carries out the reaction sn-glycerol 3-phosphate + NAD(+) = dihydroxyacetone phosphate + NADH + H(+). It catalyses the reaction sn-glycerol 3-phosphate + NADP(+) = dihydroxyacetone phosphate + NADPH + H(+). It participates in membrane lipid metabolism; glycerophospholipid metabolism. Its function is as follows. Catalyzes the reduction of the glycolytic intermediate dihydroxyacetone phosphate (DHAP) to sn-glycerol 3-phosphate (G3P), the key precursor for phospholipid synthesis. This is Glycerol-3-phosphate dehydrogenase [NAD(P)+] from Leptothrix cholodnii (strain ATCC 51168 / LMG 8142 / SP-6) (Leptothrix discophora (strain SP-6)).